We begin with the raw amino-acid sequence, 367 residues long: 3-isopropylmalate dehydrogenase (367 aa).

Position 77-90 (77-90 (GPKWDAVPYEVRPE)) interacts with NAD(+). R97, R107, R135, and D226 together coordinate substrate. Positions 226, 250, and 254 each coordinate Mg(2+). Position 290–302 (290–302 (GSAPDIAGKGIAN)) interacts with NAD(+).

Belongs to the isocitrate and isopropylmalate dehydrogenases family. LeuB type 1 subfamily. In terms of assembly, homodimer. Mg(2+) is required as a cofactor. It depends on Mn(2+) as a cofactor.

It is found in the cytoplasm. The enzyme catalyses (2R,3S)-3-isopropylmalate + NAD(+) = 4-methyl-2-oxopentanoate + CO2 + NADH. It participates in amino-acid biosynthesis; L-leucine biosynthesis; L-leucine from 3-methyl-2-oxobutanoate: step 3/4. Catalyzes the oxidation of 3-carboxy-2-hydroxy-4-methylpentanoate (3-isopropylmalate) to 3-carboxy-4-methyl-2-oxopentanoate. The product decarboxylates to 4-methyl-2 oxopentanoate. The polypeptide is 3-isopropylmalate dehydrogenase (Mesorhizobium japonicum (strain LMG 29417 / CECT 9101 / MAFF 303099) (Mesorhizobium loti (strain MAFF 303099))).